The following is a 438-amino-acid chain: Asparagine--tRNA ligase (438 aa).

It belongs to the class-II aminoacyl-tRNA synthetase family. Homodimer.

Its subcellular location is the cytoplasm. The enzyme catalyses tRNA(Asn) + L-asparagine + ATP = L-asparaginyl-tRNA(Asn) + AMP + diphosphate + H(+). The polypeptide is Asparagine--tRNA ligase (Thermus thermophilus (strain ATCC BAA-163 / DSM 7039 / HB27)).